Consider the following 401-residue polypeptide: Multidrug resistance protein MdtA (401 aa).

Positions 1 to 20 are cleaved as a signal peptide; sequence MNQNNKHRTLLFRAALAAIA.

The protein belongs to the membrane fusion protein (MFP) (TC 8.A.1) family. As to quaternary structure, part of a tripartite efflux system composed of MdtA, MdtB and MdtC.

It is found in the cell inner membrane. In Photorhabdus laumondii subsp. laumondii (strain DSM 15139 / CIP 105565 / TT01) (Photorhabdus luminescens subsp. laumondii), this protein is Multidrug resistance protein MdtA.